The following is a 224-amino-acid chain: Cytidylate kinase (224 aa).

11 to 19 serves as a coordination point for ATP; sequence GPAAAGKST.

The protein belongs to the cytidylate kinase family. Type 1 subfamily.

It is found in the cytoplasm. The enzyme catalyses CMP + ATP = CDP + ADP. It catalyses the reaction dCMP + ATP = dCDP + ADP. The chain is Cytidylate kinase from Listeria welshimeri serovar 6b (strain ATCC 35897 / DSM 20650 / CCUG 15529 / CIP 8149 / NCTC 11857 / SLCC 5334 / V8).